A 397-amino-acid polypeptide reads, in one-letter code: Elongation factor Tu (397 aa).

A tr-type G domain is found at Lys10–Glu206. The interval Gly19–Thr26 is G1. Gly19–Thr26 contributes to the GTP binding site. Thr26 lines the Mg(2+) pocket. The G2 stretch occupies residues Gly62–Ser66. Residues Asp83–Gly86 are G3. GTP-binding positions include Asp83–His87 and Asn138–Asp141. The interval Asn138–Asp141 is G4. The segment at Ser176–Leu178 is G5.

The protein belongs to the TRAFAC class translation factor GTPase superfamily. Classic translation factor GTPase family. EF-Tu/EF-1A subfamily. As to quaternary structure, monomer.

The protein resides in the cytoplasm. It catalyses the reaction GTP + H2O = GDP + phosphate + H(+). Its function is as follows. GTP hydrolase that promotes the GTP-dependent binding of aminoacyl-tRNA to the A-site of ribosomes during protein biosynthesis. The polypeptide is Elongation factor Tu (Salinispora arenicola (strain CNS-205)).